The sequence spans 449 residues: UNC93-like protein MFSD11 (449 aa).

Residues 8 to 28 (LFNIIILGVAFMFMFTAFQTC) traverse the membrane as a helical segment. N40 carries an N-linked (GlcNAc...) asparagine glycan. 5 helical membrane-spanning segments follow: residues 53–73 (AIIY…VAIV), 74–94 (GPQL…AVFI), 96–116 (PFPW…AVLW), 138–158 (IFWA…YFAW), and 170–190 (RTVF…FFLI). Residue S204 is modified to Phosphoserine. 6 helical membrane passes run 239 to 259 (MLLL…FSGV), 277 to 297 (LIGL…SLFG), 309 to 329 (PVVL…FLNM), 359 to 379 (FLLG…LGFL), 385 to 405 (APAF…AFFY), and 410 to 430 (LLHW…ISFF).

Belongs to the unc-93 family.

The protein resides in the membrane. This is UNC93-like protein MFSD11 (MFSD11) from Homo sapiens (Human).